Consider the following 383-residue polypeptide: Lipid-A-disaccharide synthase (383 aa).

Belongs to the LpxB family.

It catalyses the reaction a lipid X + a UDP-2-N,3-O-bis[(3R)-3-hydroxyacyl]-alpha-D-glucosamine = a lipid A disaccharide + UDP + H(+). Its pathway is bacterial outer membrane biogenesis; LPS lipid A biosynthesis. In terms of biological role, condensation of UDP-2,3-diacylglucosamine and 2,3-diacylglucosamine-1-phosphate to form lipid A disaccharide, a precursor of lipid A, a phosphorylated glycolipid that anchors the lipopolysaccharide to the outer membrane of the cell. In Trichlorobacter lovleyi (strain ATCC BAA-1151 / DSM 17278 / SZ) (Geobacter lovleyi), this protein is Lipid-A-disaccharide synthase.